The primary structure comprises 504 residues: Fumitremorgin C monooxygenase (504 aa).

Residues 9–29 traverse the membrane as a helical segment; the sequence is LPYPGVVGASLLVILGIILLF. Position 442 (Cys-442) interacts with heme.

Belongs to the cytochrome P450 family. Requires heme as cofactor.

It localises to the membrane. It catalyses the reaction fumitremorgin C + 2 reduced [NADPH--hemoprotein reductase] + 2 O2 = 12alpha,13alpha-dihydroxyfumitremorgin C + 2 oxidized [NADPH--hemoprotein reductase] + 2 H2O + 2 H(+). It participates in mycotoxin biosynthesis. In terms of biological role, cytochrome P450 monooxygenase; part of the gene cluster that mediates the biosynthesis of fumitremorgins, indole alkaloids that carry not only intriguing chemical structures, but also interesting biological and pharmacological activities. The biosynthesis of fumitremorgin-type alkaloids begins by condensation of the two amino acids L-tryptophan and L-proline to brevianamide F, catalyzed by the non-ribosomal peptide synthetase ftmPS/ftmA. Brevianamide F is then prenylated by the prenyltransferase ftmPT1/ftmB in the presence of dimethylallyl diphosphate, resulting in the formation of tryprostatin B. The three cytochrome P450 monooxygenases, ftmP450-1/ftmC, ftmP450-2/ftmE and ftmP450-3/FtmG, are responsible for the conversion of tryprostatin B to 6-hydroxytryprostatin B, tryprostatin A to fumitremorgin C and fumitremorgin C to 12,13-dihydroxyfumitremorgin C, respectively. The putative methyltransferase ftmMT/ftmD is expected for the conversion of 6-hydroxytryprostatin B to tryprostatin A. FtmPT2/FtmH catalyzes the prenylation of 12,13-dihydroxyfumitre-morgin C in the presence of dimethylallyl diphosphate, resulting in the formation of fumitremorgin B. Fumitremorgin B is further converted to verruculogen by ftmOx1/ftmF via the insertion of an endoperoxide bond between the two prenyl moieties. Finally, verruculogen is further converted to fumitremorgin A by the verruculogen prenyltransferase ftmPT3. In Neosartorya fischeri (strain ATCC 1020 / DSM 3700 / CBS 544.65 / FGSC A1164 / JCM 1740 / NRRL 181 / WB 181) (Aspergillus fischerianus), this protein is Fumitremorgin C monooxygenase.